Consider the following 913-residue polypeptide: Trafficking kinesin-binding protein 2 (913 aa).

Over residues serine 11–serine 21 the composition is skewed to polar residues. The tract at residues serine 11 to aspartate 31 is disordered. The HAP1 N-terminal domain occupies glutamate 48–lysine 353. Residues glutamine 134–glycine 355 adopt a coiled-coil conformation. The interval histidine 359–arginine 507 is interaction with HGS. Residues glutamate 442–serine 478 form a disordered region. The span at leucine 453–proline 463 shows a compositional bias: polar residues. Residues alanine 502 to valine 519 are a coiled coil. Low complexity-rich tracts occupy residues serine 688–serine 704 and proline 780–valine 789. Disordered stretches follow at residues serine 688–alanine 707 and alanine 769–proline 790.

Belongs to the milton family. As to quaternary structure, interacts with RHOT1/Miro-1 and RHOT2/Miro-2. Interacts with GABA-A receptor and O-GlcNAc transferase. Interacts with HGS. Post-translationally, O-glycosylated. Present in heart and brain (at protein level).

The protein resides in the cytoplasm. It is found in the early endosome. Its subcellular location is the mitochondrion. Its function is as follows. May regulate endosome-to-lysosome trafficking of membrane cargo, including EGFR. The protein is Trafficking kinesin-binding protein 2 (Trak2) of Rattus norvegicus (Rat).